Reading from the N-terminus, the 607-residue chain is Terpenoid synthase 9 (607 aa).

The Mg(2+) site is built by D356, D360, N501, and D509. The DDXXD motif motif lies at 356–360 (DDTFD).

It belongs to the terpene synthase family. Tpsa subfamily. Requires Mg(2+) as cofactor. Mn(2+) serves as cofactor. Predominantly expressed in roots but also in stems, leaves and flowers.

The protein resides in the cytoplasm. It functions in the pathway secondary metabolite biosynthesis; terpenoid biosynthesis. In terms of biological role, involved in terpene biosynthesis in roots. Possesses diterpene (C20) synthase activity in vitro. Does not seem to be involved in sesquiterpene (C15) biosynthesis. The protein is Terpenoid synthase 9 of Arabidopsis thaliana (Mouse-ear cress).